We begin with the raw amino-acid sequence, 244 residues long: Mediator of RNA polymerase II transcription subunit 8 (244 aa).

Residues 6–30 (QEQLKTLEQSRQRLVQLTRSLASLI) are a coiled coil.

It belongs to the Mediator complex subunit 8 family. In terms of assembly, component of the Mediator complex.

It is found in the nucleus. Component of the Mediator complex, a coactivator involved in the regulated transcription of nearly all RNA polymerase II-dependent genes. Mediator functions as a bridge to convey information from gene-specific regulatory proteins to the basal RNA polymerase II transcription machinery. Mediator is recruited to promoters by direct interactions with regulatory proteins and serves as a scaffold for the assembly of a functional preinitiation complex with RNA polymerase II and the general transcription factors. This chain is Mediator of RNA polymerase II transcription subunit 8 (med8), found in Aspergillus oryzae (strain ATCC 42149 / RIB 40) (Yellow koji mold).